Reading from the N-terminus, the 393-residue chain is FAD-dependent monooxygenase dbaB (393 aa).

The signal sequence occupies residues 1-23; it reads MTRTSPTLPVIILGAGMVGLTLA. FAD is bound by residues Glu-37 and Arg-107. Asn-128 carries an N-linked (GlcNAc...) asparagine glycan. The active site involves Tyr-221. The N-linked (GlcNAc...) asparagine glycan is linked to Asn-233. Asp-320 provides a ligand contact to FAD.

The protein belongs to the paxM FAD-dependent monooxygenase family. Requires FAD as cofactor.

The protein operates within secondary metabolite biosynthesis. FAD-dependent monooxygenase; part of the gene cluster that mediates the biosynthesis of the antibiotic 2,4-dihydroxy-3-methyl-6-(2-oxopropyl)benzaldehyde (DHMBA) and its derivatives. The direct non-reducing polyketide synthase dbaI product is 2,4-dihydroxy-3-methyl-6-(2-oxopropyl)benzaldehyde (DHMBA), produced by condensation of one acetyl-CoA starter unit with 4 malonyl-CoA units and one methylation step. The FAD-dependent monooxygenase dbaH is responsible for the synthesis of yellow pigments derived from the oxidation of DHMBA. The roles of dbaB, C, E and F have still to be determined. The sequence is that of FAD-dependent monooxygenase dbaB from Emericella nidulans (strain FGSC A4 / ATCC 38163 / CBS 112.46 / NRRL 194 / M139) (Aspergillus nidulans).